A 285-amino-acid polypeptide reads, in one-letter code: 2,3,4,5-tetrahydropyridine-2,6-dicarboxylate N-succinyltransferase (285 aa).

Residues arginine 111 and aspartate 148 each coordinate substrate.

It belongs to the transferase hexapeptide repeat family. As to quaternary structure, homotrimer.

The protein localises to the cytoplasm. It catalyses the reaction (S)-2,3,4,5-tetrahydrodipicolinate + succinyl-CoA + H2O = (S)-2-succinylamino-6-oxoheptanedioate + CoA. It functions in the pathway amino-acid biosynthesis; L-lysine biosynthesis via DAP pathway; LL-2,6-diaminopimelate from (S)-tetrahydrodipicolinate (succinylase route): step 1/3. In Rhizobium meliloti (strain 1021) (Ensifer meliloti), this protein is 2,3,4,5-tetrahydropyridine-2,6-dicarboxylate N-succinyltransferase.